We begin with the raw amino-acid sequence, 194 residues long: Probable thymidylate kinase (194 aa).

8–15 (GIDGSGKT) contacts ATP.

It belongs to the thymidylate kinase family.

It carries out the reaction dTMP + ATP = dTDP + ADP. In Sulfolobus acidocaldarius (strain ATCC 33909 / DSM 639 / JCM 8929 / NBRC 15157 / NCIMB 11770), this protein is Probable thymidylate kinase.